Consider the following 252-residue polypeptide: Pyridoxine 5'-phosphate synthase (252 aa).

Position 7 (Asn-7) interacts with 3-amino-2-oxopropyl phosphate. 9–10 is a binding site for 1-deoxy-D-xylulose 5-phosphate; that stretch reads DH. Residue Arg-18 participates in 3-amino-2-oxopropyl phosphate binding. The active-site Proton acceptor is His-43. 1-deoxy-D-xylulose 5-phosphate-binding residues include Arg-45 and His-50. Catalysis depends on Glu-70, which acts as the Proton acceptor. A 1-deoxy-D-xylulose 5-phosphate-binding site is contributed by Thr-100. His-190 acts as the Proton donor in catalysis. Residues Gly-191 and 212-213 contribute to the 3-amino-2-oxopropyl phosphate site; that span reads GH.

Belongs to the PNP synthase family. Homooctamer; tetramer of dimers.

It localises to the cytoplasm. It carries out the reaction 3-amino-2-oxopropyl phosphate + 1-deoxy-D-xylulose 5-phosphate = pyridoxine 5'-phosphate + phosphate + 2 H2O + H(+). Its pathway is cofactor biosynthesis; pyridoxine 5'-phosphate biosynthesis; pyridoxine 5'-phosphate from D-erythrose 4-phosphate: step 5/5. Its function is as follows. Catalyzes the complicated ring closure reaction between the two acyclic compounds 1-deoxy-D-xylulose-5-phosphate (DXP) and 3-amino-2-oxopropyl phosphate (1-amino-acetone-3-phosphate or AAP) to form pyridoxine 5'-phosphate (PNP) and inorganic phosphate. The sequence is that of Pyridoxine 5'-phosphate synthase from Synechococcus sp. (strain RCC307).